We begin with the raw amino-acid sequence, 182 residues long: Large ribosomal subunit protein uL6 (182 aa).

This sequence belongs to the universal ribosomal protein uL6 family. In terms of assembly, part of the 50S ribosomal subunit.

In terms of biological role, this protein binds to the 23S rRNA, and is important in its secondary structure. It is located near the subunit interface in the base of the L7/L12 stalk, and near the tRNA binding site of the peptidyltransferase center. The polypeptide is Large ribosomal subunit protein uL6 (Aeropyrum pernix (strain ATCC 700893 / DSM 11879 / JCM 9820 / NBRC 100138 / K1)).